Reading from the N-terminus, the 362-residue chain is B3 domain-containing protein IDEF1 (362 aa).

The interval V30–A91 is disordered. The span at P48–N70 shows a compositional bias: basic residues. The TF-B3 DNA-binding region spans L253–I355.

In terms of processing, polyubiquitinated. Ubiquitination leads to its subsequent degradation via the proteasome pathway. In terms of tissue distribution, expressed in roots.

It localises to the nucleus. Functionally, transcription regulator involved in iron deficiency response and tolerance. May regulate directly iron transporters or other transcription factors involved in iron-deficiency response. Binds specifically to the DNA sequence 5'-CATGC-3' of the IDE1 element found in the promoter of the barley iron deficiency-inducible gene IDS2. The chain is B3 domain-containing protein IDEF1 (IDEF1) from Oryza sativa subsp. japonica (Rice).